The chain runs to 812 residues: Valine--tRNA ligase (812 aa).

The 'HIGH' region signature appears at Pro-46 to His-56. The short motif at Lys-536–Ser-540 is the 'KMSKS' region element. Residue Lys-539 coordinates ATP.

It belongs to the class-I aminoacyl-tRNA synthetase family. ValS type 2 subfamily. As to quaternary structure, monomer.

The protein resides in the cytoplasm. It carries out the reaction tRNA(Val) + L-valine + ATP = L-valyl-tRNA(Val) + AMP + diphosphate. Its function is as follows. Catalyzes the attachment of valine to tRNA(Val). As ValRS can inadvertently accommodate and process structurally similar amino acids such as threonine, to avoid such errors, it has a 'posttransfer' editing activity that hydrolyzes mischarged Thr-tRNA(Val) in a tRNA-dependent manner. The protein is Valine--tRNA ligase of Rickettsia conorii (strain ATCC VR-613 / Malish 7).